Here is a 221-residue protein sequence, read N- to C-terminus: Inositol phosphorylceramide synthase regulatory subunit KEI1 (221 aa).

Helical transmembrane passes span 11–31 (SFLG…ISIL), 54–74 (WIAY…LYLI), 79–99 (LLVF…TCFF), and 154–174 (ILIT…LASF). Positions 176–221 (QELLHHPKYLVDRDDVEQNLKNKPIWKRLWAKSQKGCYKLCKNLLE) are COPI vesicle-binding.

This sequence belongs to the KEI1 family. As to quaternary structure, component of the inositol phosphorylceramide synthase complex composed of at least AUR1 and KEI1. Interacts (via C-terminal region) with COP1 and SEC21. Note=The interaction with AUR1 seems to occur with the full-length protein before cleavage by KEX2 since both full-length and short chains of KEI1 interact with AUR1. The precursor protein is cleaved into two polypeptide chains, KEI1N and KEI1C. The cleavage is performed in the Golgi apparatus by the KEX2 protease which recognizes residue Arg-135. Generation of KEX2 cleavage site may have been an accidental event in evolution without specific advantages or disadvantages in IPC synthesis.

It localises to the golgi apparatus membrane. Functionally, regulatory component of the inositol phosphorylceramide (ICP) synthase which catalyzes the addition of a phosphorylinositol group onto ceramide to form inositol phosphorylceramide, an essential step in sphingolipid biosynthesis. Helps the medial Golgi localization of IPC synthase in a COPI vesicle-dependent manner. This is Inositol phosphorylceramide synthase regulatory subunit KEI1 (KEI1) from Saccharomyces cerevisiae (strain ATCC 204508 / S288c) (Baker's yeast).